A 63-amino-acid chain; its full sequence is Large ribosomal subunit protein uL29 (63 aa).

Belongs to the universal ribosomal protein uL29 family.

This Aggregatibacter actinomycetemcomitans (Actinobacillus actinomycetemcomitans) protein is Large ribosomal subunit protein uL29 (rpmC).